The chain runs to 339 residues: Transcription initiation factor IIB (339 aa).

The segment at 39-70 (EELICPMCGSKNIIKDYERAEIVCETCGCVLQ) adopts a TFIIB-type zinc-finger fold. Residues Cys43, Cys46, Cys62, and Cys65 each coordinate Zn(2+). Tandem repeats lie at residues 156–239 (SELD…SREL) and 250–331 (DYVP…ELTE).

This sequence belongs to the TFIIB family.

Stabilizes TBP binding to an archaeal box-A promoter. Also responsible for recruiting RNA polymerase II to the pre-initiation complex (DNA-TBP-TFIIB). The protein is Transcription initiation factor IIB of Methanothermococcus thermolithotrophicus (Methanococcus thermolithotrophicus).